A 147-amino-acid chain; its full sequence is Response regulator Rcp1 (147 aa).

The region spanning 10-135 (VILLVEDSKA…DLFKMVQGIE (126 aa)) is the Response regulatory domain. The residue at position 68 (aspartate 68) is a 4-aspartylphosphate.

Phosphorylated by Cph1.

Functionally, forms a two-component system with Cph1 in which it acts as receiver substrate. This chain is Response regulator Rcp1 (rcp1), found in Synechocystis sp. (strain ATCC 27184 / PCC 6803 / Kazusa).